A 308-amino-acid chain; its full sequence is Sulfoquinovosyl glycerol transport system permease protein SmoG (308 aa).

The next 6 helical transmembrane spans lie at 28–48, 92–112, 126–146, 164–184, 223–243, and 279–299; these read LAVL…VYPV, VLIT…LALL, SLLI…AWFF, GIIW…TIIW, ITLP…TITA, and LGYG…VTAV. The 213-residue stretch at 88–300 folds into the ABC transmembrane type-1 domain; it reads TWNTVLITLI…ALSMCVTAVY (213 aa).

This sequence belongs to the binding-protein-dependent transport system permease family. As to quaternary structure, the complex is probably composed of two ATP-binding proteins (SmoE), two transmembrane proteins (SmoG and SmoH) and a solute-binding protein (SmoF).

The protein resides in the cell inner membrane. Part of the ABC transporter complex SmoEFGH involved in sulfoquinovosyl glycerol (SQGro) uptake. Responsible for the translocation of the substrate across the membrane. This chain is Sulfoquinovosyl glycerol transport system permease protein SmoG, found in Agrobacterium fabrum (strain C58 / ATCC 33970) (Agrobacterium tumefaciens (strain C58)).